Consider the following 288-residue polypeptide: Bifunctional protein FolD (288 aa).

Residues 166–168 and Ile232 each bind NADP(+); that span reads GAS.

Belongs to the tetrahydrofolate dehydrogenase/cyclohydrolase family. Homodimer.

It carries out the reaction (6R)-5,10-methylene-5,6,7,8-tetrahydrofolate + NADP(+) = (6R)-5,10-methenyltetrahydrofolate + NADPH. The catalysed reaction is (6R)-5,10-methenyltetrahydrofolate + H2O = (6R)-10-formyltetrahydrofolate + H(+). The protein operates within one-carbon metabolism; tetrahydrofolate interconversion. Functionally, catalyzes the oxidation of 5,10-methylenetetrahydrofolate to 5,10-methenyltetrahydrofolate and then the hydrolysis of 5,10-methenyltetrahydrofolate to 10-formyltetrahydrofolate. The protein is Bifunctional protein FolD of Escherichia coli O8 (strain IAI1).